Reading from the N-terminus, the 219-residue chain is Cytidylate kinase (219 aa).

ATP is bound at residue 21–29; sequence GPAASGKGT.

The protein belongs to the cytidylate kinase family. Type 1 subfamily.

It localises to the cytoplasm. It carries out the reaction CMP + ATP = CDP + ADP. The catalysed reaction is dCMP + ATP = dCDP + ADP. This chain is Cytidylate kinase, found in Rickettsia typhi (strain ATCC VR-144 / Wilmington).